We begin with the raw amino-acid sequence, 161 residues long: Phosphotransferase enzyme IIB component GlvB (161 aa).

Residues Leu10 to Leu32 form a helical membrane-spanning segment. A PTS EIIB type-1 domain is found at Leu70–Ala152. Cys92 serves as the catalytic Phosphocysteine intermediate.

It localises to the cell inner membrane. Functionally, the phosphoenolpyruvate-dependent sugar phosphotransferase system (sugar PTS), a major carbohydrate active -transport system, catalyzes the phosphorylation of incoming sugar substrates concomitantly with their translocation across the cell membrane. This operon may be cryptic in wild-type K12 strains. This Escherichia coli (strain K12) protein is Phosphotransferase enzyme IIB component GlvB.